The chain runs to 290 residues: Ubiquinone biosynthesis protein COQ4, mitochondrial (290 aa).

The N-terminal 32 residues, Met1 to Phe32, are a transit peptide targeting the mitochondrion. His168, Asp169, His172, and Glu184 together coordinate Zn(2+). Positions Lys260–Val290 are disordered.

It belongs to the COQ4 family. As to quaternary structure, component of a multi-subunit COQ enzyme complex, composed of at least COQ3, COQ4, COQ5, COQ6, COQ7 and COQ9. Zn(2+) is required as a cofactor.

The protein localises to the mitochondrion inner membrane. The enzyme catalyses a 4-hydroxy-3-methoxy-5-(all-trans-polyprenyl)benzoate + H(+) = a 2-methoxy-6-(all-trans-polyprenyl)phenol + CO2. The protein operates within cofactor biosynthesis; ubiquinone biosynthesis. In terms of biological role, lyase that catalyzes the C1-decarboxylation of 4-hydroxy-3-methoxy-5-(all-trans-polyprenyl)benzoic acid into 2-methoxy-6-(all-trans-polyprenyl)phenol during ubiquinone biosynthesis. The chain is Ubiquinone biosynthesis protein COQ4, mitochondrial from Phaeosphaeria nodorum (strain SN15 / ATCC MYA-4574 / FGSC 10173) (Glume blotch fungus).